Consider the following 342-residue polypeptide: UDP-N-acetylenolpyruvoylglucosamine reductase (342 aa).

Positions 13–183 constitute an FAD-binding PCMH-type domain; sequence IDHNAQHIVC…VAVGLRLPKE (171 aa). Arginine 159 is a catalytic residue. Tyrosine 190 contributes to the substrate binding site. Catalysis depends on serine 229, which acts as the Proton donor. The active site involves glutamate 325.

The protein belongs to the MurB family. In terms of assembly, monomer. FAD is required as a cofactor.

It is found in the cytoplasm. It carries out the reaction UDP-N-acetyl-alpha-D-muramate + NADP(+) = UDP-N-acetyl-3-O-(1-carboxyvinyl)-alpha-D-glucosamine + NADPH + H(+). Its pathway is cell wall biogenesis; peptidoglycan biosynthesis. Its function is as follows. Cell wall formation. The sequence is that of UDP-N-acetylenolpyruvoylglucosamine reductase from Escherichia coli O157:H7.